We begin with the raw amino-acid sequence, 306 residues long: tRNA pseudouridine synthase B (306 aa).

Catalysis depends on D46, which acts as the Nucleophile.

It belongs to the pseudouridine synthase TruB family. Type 1 subfamily.

It carries out the reaction uridine(55) in tRNA = pseudouridine(55) in tRNA. Its function is as follows. Responsible for synthesis of pseudouridine from uracil-55 in the psi GC loop of transfer RNAs. The chain is tRNA pseudouridine synthase B from Gluconacetobacter diazotrophicus (strain ATCC 49037 / DSM 5601 / CCUG 37298 / CIP 103539 / LMG 7603 / PAl5).